The chain runs to 520 residues: MEELQGYLEKDRSRQQHFLYPLLFQEYIYALAHNHGVNGSIFYEPVEVFGYDNKSSLVLVKRLITRIYQQNYLISLVNDSNQNRFVEYNHNNFFXSHFHSQMISESFAIIVEIPFSLRLVSYFEEKEIPKYHNLRSIHSIFPFLEDKLSHLNYVSDILIPHPIHMEILVQILQCWIQDVPFLHLLRFFLHEYHNLNSLLITQKKSIYVFSKENKRVFRFLYNFYVFEWEFLFVFIRKQSSYLRLTSSGTFLERTHFYEKIEHLKIEHFVVVCRNFFQRTLWFCKDPFMHYVRYQGKAILASKGTHLLMKKWKYLFFNFWQYYFHVWSQPYRIHINQLSNYSFYFLGYLSSLLLHFSAVRNQMLKNSFLIDTITKKFDTIVPVIFLIGSLAKAKFCTVSGHPISKPIWTDLSDSDILDRFGRICRNLSHYHSGSSKKQSLYRIKYILRLSCARTLARKHKSTVRTFLRRSGSGLLEEFFTEEEQVLSLIFPKTTPFILHGSHRERIWYLDIIRINDLVNHS.

It belongs to the intron maturase 2 family. MatK subfamily.

Its subcellular location is the plastid. It localises to the chloroplast. Usually encoded in the trnK tRNA gene intron. Probably assists in splicing its own and other chloroplast group II introns. This is Maturase K from Ruscus aculeatus (Butcher's broom).